The sequence spans 655 residues: p-hydroxybenzoic acid efflux pump subunit AaeB (655 aa).

Residues 1–12 lie on the Periplasmic side of the membrane; the sequence is MGIFSIANQHIR. Residues 13-33 traverse the membrane as a helical segment; the sequence is FAVKLATAIVLALFVGFHFQL. At 34–37 the chain is on the cytoplasmic side; it reads ETPR. The helical transmembrane segment at 38 to 58 threads the bilayer; the sequence is WAVLTAAIVAAGPAFAAGGEP. Over 59–68 the chain is Periplasmic; sequence YSGAIRYRGF. The chain crosses the membrane as a helical span at residues 69–89; that stretch reads LRIIGTFIGCIAGLVIIIAMI. At 90–92 the chain is on the cytoplasmic side; that stretch reads RAP. Residues 93–113 form a helical membrane-spanning segment; sequence LLMILVCCIWAGFCTWISSLV. The Periplasmic portion of the chain corresponds to 114 to 120; sequence RIENSYA. The helical transmembrane segment at 121–141 threads the bilayer; that stretch reads WGLAGYTALIIVITIQPEPLL. Over 142-151 the chain is Cytoplasmic; it reads TPQFAVERCS. A helical membrane pass occupies residues 152-172; sequence EIVIGIVCAIMADLLFSPRSI. The Periplasmic portion of the chain corresponds to 173–369; that stretch reads KQEVDRELES…RTTLSCILGT (197 aa). The helical transmembrane segment at 370-390 threads the bilayer; that stretch reads LFWLWTGWTSGSGAMVMIAVV. Over 391–406 the chain is Cytoplasmic; the sequence is TSLAMRLPNPRMVAID. The chain crosses the membrane as a helical span at residues 407-427; it reads FIYGTLAALPLGLLYFLVIIP. The Periplasmic segment spans residues 428-430; it reads NTQ. The helical transmembrane segment at 431–451 threads the bilayer; that stretch reads QSMLLLCISLAVLGFFLGIEV. The Cytoplasmic portion of the chain corresponds to 452–458; the sequence is QKRRLGS. Residues 459–479 form a helical membrane-spanning segment; sequence MGALASTINIIVLDNPMTFHF. The Periplasmic portion of the chain corresponds to 480–481; sequence SQ. The helical transmembrane segment at 482–502 threads the bilayer; the sequence is FLDSALGQIVGCVLAFTVILL. The Cytoplasmic portion of the chain corresponds to 503–655; the sequence is VRDKSRDRTG…HKYQHALTDS (153 aa).

It belongs to the aromatic acid exporter ArAE (TC 2.A.85) family.

It localises to the cell inner membrane. Forms an efflux pump with AaeA. Could function as a metabolic relief valve, allowing to eliminate certain compounds when they accumulate to high levels in the cell. The protein is p-hydroxybenzoic acid efflux pump subunit AaeB of Escherichia coli O6:H1 (strain CFT073 / ATCC 700928 / UPEC).